Here is a 161-residue protein sequence, read N- to C-terminus: MAEKMLVMTSNDGKNIEVPRDVAERSLLIKNMLEDLGDPTEPIPIPNVSENVLSKVLEWCAHHRNDPPSSADDDDSRRKTTDIEEWDQKFMQVDQEMLFEIILAANYLDIKPLLDIGCKTVANMIKGKSPEEIRKTFNIQNDFTPEEEDQIRRENEWAEDR.

The segment at 102 to 161 is interaction with the F-box domain of F-box proteins; it reads ILAANYLDIKPLLDIGCKTVANMIKGKSPEEIRKTFNIQNDFTPEEEDQIRRENEWAEDR.

It belongs to the SKP1 family. As to quaternary structure, component of the SCF (SKP1-CUL1-F-box protein) E3 ubiquitin ligase complexes.

Its pathway is protein modification; protein ubiquitination. In terms of biological role, essential component of the SCF (SKP1-CUL1-F-box protein) E3 ubiquitin ligase complexes, which mediate the ubiquitination and subsequent proteasomal degradation of target proteins. Controls sulfur metabolite repression, probably by mediating the inactivation or degradation of the metR transcription factor. The protein is E3 ubiquitin ligase complex SCF subunit sconC (sconC) of Emericella nidulans (strain FGSC A4 / ATCC 38163 / CBS 112.46 / NRRL 194 / M139) (Aspergillus nidulans).